An 843-amino-acid chain; its full sequence is Protein P (843 aa).

Positions 1-177 (MPLSYQHFRK…FCGSPYSWEQ (177 aa)) are terminal protein domain (TP). Residues 178 to 346 (ELQHGRLVLQ…HCLFHIVNLI (169 aa)) are spacer. Disordered stretches follow at residues 221–240 (SRLG…QGGS) and 289–315 (VSTS…SRSQ). Low complexity predominate over residues 223–235 (LGPQPTQGQLAGL). The interval 347–690 (DDWGPCAEHG…YLNLYPVARQ (344 aa)) is polymerase/reverse transcriptase domain (RT). One can recognise a Reverse transcriptase domain in the interval 357-600 (EHRIRTPRTP…YSLNFMGYVI (244 aa)). Residues D429, D551, and D552 each coordinate Mg(2+).

This sequence belongs to the hepadnaviridae P protein family.

The catalysed reaction is DNA(n) + a 2'-deoxyribonucleoside 5'-triphosphate = DNA(n+1) + diphosphate. It carries out the reaction Endonucleolytic cleavage to 5'-phosphomonoester.. Activated by host HSP70 and HSP40 in vitro to be able to bind the epsilon loop of the pgRNA. Because deletion of the RNase H region renders the protein partly chaperone-independent, the chaperones may be needed indirectly to relieve occlusion of the RNA-binding site by this domain. Inhibited by several reverse-transcriptase inhibitors: Lamivudine, Adefovir and Entecavir. In terms of biological role, multifunctional enzyme that converts the viral RNA genome into dsDNA in viral cytoplasmic capsids. This enzyme displays a DNA polymerase activity that can copy either DNA or RNA templates, and a ribonuclease H (RNase H) activity that cleaves the RNA strand of RNA-DNA heteroduplexes in a partially processive 3'- to 5'-endonucleasic mode. Neo-synthesized pregenomic RNA (pgRNA) are encapsidated together with the P protein, and reverse-transcribed inside the nucleocapsid. Initiation of reverse-transcription occurs first by binding the epsilon loop on the pgRNA genome, and is initiated by protein priming, thereby the 5'-end of (-)DNA is covalently linked to P protein. Partial (+)DNA is synthesized from the (-)DNA template and generates the relaxed circular DNA (RC-DNA) genome. After budding and infection, the RC-DNA migrates in the nucleus, and is converted into a plasmid-like covalently closed circular DNA (cccDNA). The activity of P protein does not seem to be necessary for cccDNA generation, and is presumably released from (+)DNA by host nuclear DNA repair machinery. The polypeptide is Protein P (Homo sapiens (Human)).